The primary structure comprises 147 residues: Shadow of prion protein (147 aa).

A signal peptide spans 1–24 (MNWTTATCWALLLATAFLCDSCSA). Over residues 26-43 (GGRGGARGSARGVRGGAR) the composition is skewed to gly residues. The tract at residues 26-46 (GGRGGARGSARGVRGGARGAS) is disordered. Asn107 carries N-linked (GlcNAc...) asparagine glycosylation. Gly122 is lipidated: GPI-anchor amidated glycine. Positions 123 to 147 (SGSVHSPRICLLLSGTLGALELLRP) are cleaved as a propeptide — removed in mature form.

This sequence belongs to the SPRN family. Post-translationally, N-glycosylated. In terms of tissue distribution, almost exclusively expressed in brain, with weak expression in lung and stomach.

It localises to the cell membrane. Prion-like protein that has PrP(C)-like neuroprotective activity. May act as a modulator for the biological actions of normal and abnormal PrP. The sequence is that of Shadow of prion protein (Sprn) from Rattus norvegicus (Rat).